The following is a 329-amino-acid chain: Serpentine receptor class alpha-6 (329 aa).

The next 7 helical transmembrane spans lie at 26–46 (VDLLAIILAFFASYFAIKIVI), 68–88 (LYQISYGIEAIGMLYRGFFML), 104–124 (YFKVLMIGTSGMIFGQTGLLI), 143–163 (IGVCISLIVLVCSTSSGFIIL), 187–207 (NLFSILSTVLTLFNLIVSIFI), 238–258 (ICFLALSQFLWMFMYSFGILI), and 273–293 (FWIAWCYTMPFIALMFPVLLI).

This sequence belongs to the nematode receptor-like protein sra family.

It is found in the membrane. In Caenorhabditis elegans, this protein is Serpentine receptor class alpha-6 (sra-6).